The following is a 334-amino-acid chain: Formamidase (334 aa).

One can recognise a CN hydrolase domain in the interval 14-260 (FLVAAIQFPV…WEIVTGEIYP (247 aa)). Catalysis depends on glutamate 60, which acts as the Proton acceptor. Lysine 133 functions as the Proton donor in the catalytic mechanism. Cysteine 166 functions as the Nucleophile in the catalytic mechanism.

Belongs to the carbon-nitrogen hydrolase superfamily. Aliphatic amidase family.

It catalyses the reaction formamide + H2O = formate + NH4(+). In terms of biological role, is an aliphatic amidase with a restricted substrate specificity, as it only hydrolyzes formamide. This Helicobacter pylori (strain HPAG1) protein is Formamidase.